The sequence spans 341 residues: 5-formaminoimidazole-4-carboxamide-1-(beta)-D-ribofuranosyl 5'-monophosphate synthetase (341 aa).

5-amino-1-(5-phospho-beta-D-ribosyl)imidazole-4-carboxamide is bound by residues His-27 and Ser-92. The 216-residue stretch at 113-328 (RELLRWEADQ…MGERIAHEIK (216 aa)) folds into the ATP-grasp domain. ATP contacts are provided by residues 143–195 (AEEV…VPAY) and Glu-217. Residue Asn-237 participates in 5-amino-1-(5-phospho-beta-D-ribosyl)imidazole-4-carboxamide binding. The Mg(2+) site is built by Glu-276 and Glu-289.

The protein belongs to the phosphohexose mutase family. It depends on Mg(2+) as a cofactor. Requires Mn(2+) as cofactor.

The enzyme catalyses 5-amino-1-(5-phospho-beta-D-ribosyl)imidazole-4-carboxamide + formate + ATP = 5-formamido-1-(5-phospho-D-ribosyl)imidazole-4-carboxamide + ADP + phosphate. It functions in the pathway purine metabolism; IMP biosynthesis via de novo pathway; 5-formamido-1-(5-phospho-D-ribosyl)imidazole-4-carboxamide from 5-amino-1-(5-phospho-D-ribosyl)imidazole-4-carboxamide (formate route): step 1/1. Functionally, catalyzes the ATP- and formate-dependent formylation of 5-aminoimidazole-4-carboxamide-1-beta-d-ribofuranosyl 5'-monophosphate (AICAR) to 5-formaminoimidazole-4-carboxamide-1-beta-d-ribofuranosyl 5'-monophosphate (FAICAR) in the absence of folates. This Pyrobaculum aerophilum (strain ATCC 51768 / DSM 7523 / JCM 9630 / CIP 104966 / NBRC 100827 / IM2) protein is 5-formaminoimidazole-4-carboxamide-1-(beta)-D-ribofuranosyl 5'-monophosphate synthetase.